We begin with the raw amino-acid sequence, 312 residues long: Probable HTH-type transcriptional regulator LrhA (312 aa).

An HTH lysR-type domain is found at 11-68 (LDLDLLRTFVAVADLNTFAAAAAAVCRTQSAVSQQMQRLEQLVGKELFARHGRNKLLT). Positions 28-47 (FAAAAAAVCRTQSAVSQQMQ) form a DNA-binding region, H-T-H motif.

This sequence belongs to the LysR transcriptional regulatory family.

Its function is as follows. Not known, does not seem to act on the proton translocating NADH dehydrogenase genes (nuoA-N) which are part of the lrhA operon. In Escherichia coli (strain K12), this protein is Probable HTH-type transcriptional regulator LrhA (lrhA).